We begin with the raw amino-acid sequence, 740 residues long: Ethylene receptor 1 (740 aa).

3 helical membrane passes run 23-43 (ISDF…IYFV), 53-73 (WVLV…LINL), and 92-112 (VLTA…IPDL). Positions 65 and 69 each coordinate Cu cation. The 150-residue stretch at 158-307 (DRHTILKTTL…VVADQVAVAL (150 aa)) folds into the GAF domain. In terms of domain architecture, Histidine kinase spans 350 to 588 (VMNHEMRTPM…TFIVKLGIAE (239 aa)). At His353 the chain carries Phosphohistidine; by autocatalysis. The Response regulatory domain maps to 614–731 (KVLVMDDNGV…KMRSVLSELI (118 aa)). At Asp662 the chain carries 4-aspartylphosphate.

Belongs to the ethylene receptor family. As to quaternary structure, homodimer; disulfide-linked. The cofactor is Cu cation. Activation probably requires a transfer of a phosphate group between a His in the transmitter domain and an Asp of the receiver domain.

Its subcellular location is the endoplasmic reticulum membrane. It carries out the reaction ATP + protein L-histidine = ADP + protein N-phospho-L-histidine.. In terms of biological role, may act early in the ethylene signal transduction pathway, possibly as an ethylene receptor, or as a regulator of the pathway. The chain is Ethylene receptor 1 (ETR1) from Cucumis sativus (Cucumber).